The primary structure comprises 123 residues: Prostate stem cell antigen (123 aa).

A signal peptide spans 1–20 (MKTVFFLLLATYLALHPGAA). The UPAR/Ly6 domain maps to 21–95 (LQCYSCTAQM…CCYSDLCNVN (75 aa)). Intrachain disulfides connect Cys23–Cys48, Cys26–Cys35, Cys41–Cys66, Cys70–Cys86, and Cys87–Cys92. Asn40 carries an N-linked (GlcNAc...) asparagine glycan. Asn95 is lipidated: GPI-anchor amidated asparagine. The propeptide at 96–123 (GAHTLKPPTTLGLLTVLCSLLLWGSSRL) is removed in mature form.

In terms of assembly, interacts with CHRNA4. As to expression, predominantly expressed in prostate. Also found in spleen, liver, lung, prostate, kidney and testis. Expressed in brain cortex; expression is increased in transgenic mouse model of Alzheimer disease (at protein level).

The protein localises to the cell membrane. Its function is as follows. May be involved in the regulation of cell proliferation. May act as a modulator of nicotinic acetylcholine receptors (nAChRs) activity. In vitro inhibits nicotine-induced signaling probably implicating alpha-3:beta-2- or alpha-7-containing nAChRs. The polypeptide is Prostate stem cell antigen (Psca) (Mus musculus (Mouse)).